Consider the following 389-residue polypeptide: Chromobox protein homolog 8 (389 aa).

In terms of domain architecture, Chromo spans 11 to 69 (FAAEALLKRRIRKGRMEYLVKWKGWSQKYSTWEPEENILDARLLAAFEEREREMELYGP). Residues Ser110 and Ser130 each carry the phosphoserine modification. The segment at 124-241 (LRNMGLSPPA…DDTPSGAGKF (118 aa)) is disordered. The span at 145-189 (EAPRDRDRDRDRDRERDRERERERERERERERERERGTSRVDDKP) shows a compositional bias: basic and acidic residues. A phosphoserine mark is found at Ser191, Ser256, Ser265, Ser311, Ser332, and Ser352. The disordered stretch occupies residues 298-327 (GALDPNGTRVRHGSGPPSSGGGLYRDMGAQ).

In terms of assembly, component of a PRC1-like complex. Interacts with RING1 RNF2, PCGF1, PCGF2, PCGF3, BMI1, PCGF5 and PCGF6. Interacts with MLLT3 and histone H3. Interacts with PHC2.

It localises to the nucleus. Component of a Polycomb group (PcG) multiprotein PRC1-like complex, a complex class required to maintain the transcriptionally repressive state of many genes, including Hox genes, throughout development. PcG PRC1 complex acts via chromatin remodeling and modification of histones; it mediates monoubiquitination of histone H2A 'Lys-119', rendering chromatin heritably changed in its expressibility. This Homo sapiens (Human) protein is Chromobox protein homolog 8 (CBX8).